Consider the following 144-residue polypeptide: Monooxygenase ptaG (144 aa).

Belongs to the avfA family.

It functions in the pathway secondary metabolite biosynthesis. In terms of biological role, monooxygenase; part of the gene cluster that mediates the biosynthesis of pestheic acid, a diphenyl ether which is a biosynthetic precursor of the unique chloropupukeananes. The biosynthesis initiates from condensation of acetate and malonate units catalyzed by the non-reducing PKS ptaA. As the ptaA protein is TE/CLC domain-deficient, hydrolysis and Claisen cyclization of the polyketide could be catalyzed by ptaB containing a beta-lactamase domain. The ptaB protein might hydrolyze the thioester bond between the ACP of ptaA and the intermediate to release atrochrysone carboxylic acid, which is spontaneously dehydrated to form endocrocin anthrone. Endocrocin anthrone is then converted to endocrocin, catalyzed by the anthrone oxygenase ptaC. Spontaneous decarboxylation of endocrocin occurs to generate emodin. An O-methyltransferase (ptaH or ptaI) could methylate emodin to form physcion. PtaJ could then catalyze the oxidative cleavage of physcion, and rotation of the intermediate could then afford desmethylisosulochrin. PtaF, a putative NADH-dependent oxidoreductase, might also participate in the oxidative cleavage step. Desmethylisosulochrin is then transformed by another O-methyltransferase (ptaH or ptaI) to form isosulochrin. Chlorination of isosulochrin by ptaM in the cyclohexadienone B ring then produces chloroisosulochrin. PtaE is responsible for the oxidative coupling reactions of both benzophenones isosulochrin and chloroisosulochrin to RES-1214-1 and pestheic acid respectively, regardless of chlorination. The sequence is that of Monooxygenase ptaG from Pestalotiopsis fici (strain W106-1 / CGMCC3.15140).